Here is a 349-residue protein sequence, read N- to C-terminus: Flagellar P-ring protein (349 aa).

The first 16 residues, 1-16, serve as a signal peptide directing secretion; the sequence is MKYFFIIALLLSSLYS.

This sequence belongs to the FlgI family. As to quaternary structure, the basal body constitutes a major portion of the flagellar organelle and consists of four rings (L,P,S, and M) mounted on a central rod.

Its subcellular location is the periplasm. It is found in the bacterial flagellum basal body. Its function is as follows. Assembles around the rod to form the L-ring and probably protects the motor/basal body from shearing forces during rotation. The sequence is that of Flagellar P-ring protein from Aliarcobacter butzleri (strain RM4018) (Arcobacter butzleri).